The sequence spans 210 residues: Outer-membrane lipoprotein carrier protein (210 aa).

A signal peptide spans 1-22 (MRAFKWALAIGATLALPLTAQA).

The protein belongs to the LolA family. As to quaternary structure, monomer.

The protein resides in the periplasm. In terms of biological role, participates in the translocation of lipoproteins from the inner membrane to the outer membrane. Only forms a complex with a lipoprotein if the residue after the N-terminal Cys is not an aspartate (The Asp acts as a targeting signal to indicate that the lipoprotein should stay in the inner membrane). In Chromohalobacter salexigens (strain ATCC BAA-138 / DSM 3043 / CIP 106854 / NCIMB 13768 / 1H11), this protein is Outer-membrane lipoprotein carrier protein.